The chain runs to 430 residues: 3-phosphoshikimate 1-carboxyvinyltransferase (430 aa).

3-phosphoshikimate contacts are provided by lysine 33, serine 34, and arginine 38. Lysine 33 lines the phosphoenolpyruvate pocket. Positions 101 and 129 each coordinate phosphoenolpyruvate. 3-phosphoshikimate-binding residues include serine 172, serine 173, glutamine 174, serine 201, glutamate 319, and histidine 346. Phosphoenolpyruvate is bound at residue glutamine 174. Catalysis depends on glutamate 319, which acts as the Proton acceptor. Residues arginine 350, arginine 391, and lysine 416 each contribute to the phosphoenolpyruvate site.

Belongs to the EPSP synthase family. As to quaternary structure, monomer.

The protein localises to the cytoplasm. The enzyme catalyses 3-phosphoshikimate + phosphoenolpyruvate = 5-O-(1-carboxyvinyl)-3-phosphoshikimate + phosphate. The protein operates within metabolic intermediate biosynthesis; chorismate biosynthesis; chorismate from D-erythrose 4-phosphate and phosphoenolpyruvate: step 6/7. Catalyzes the transfer of the enolpyruvyl moiety of phosphoenolpyruvate (PEP) to the 5-hydroxyl of shikimate-3-phosphate (S3P) to produce enolpyruvyl shikimate-3-phosphate and inorganic phosphate. This chain is 3-phosphoshikimate 1-carboxyvinyltransferase, found in Corynebacterium glutamicum (strain ATCC 13032 / DSM 20300 / JCM 1318 / BCRC 11384 / CCUG 27702 / LMG 3730 / NBRC 12168 / NCIMB 10025 / NRRL B-2784 / 534).